The primary structure comprises 329 residues: Chlorophyllase-1, chloroplastic (329 aa).

The transit peptide at 1–21 (MAAMVDSKPAASVQGTPLLAT) directs the protein to the chloroplast. Positions 145 to 149 (GHSRG) match the GXSXG motif. Catalysis depends on Ser-147, which acts as the Nucleophile. Catalysis depends on charge relay system residues Asp-169 and His-242.

Belongs to the AB hydrolase superfamily. Lipase family.

The protein localises to the plastid. Its subcellular location is the chloroplast. The catalysed reaction is a chlorophyll + H2O = a chlorophyllide + phytol + H(+). The protein operates within porphyrin-containing compound metabolism; chlorophyll degradation. Its function is as follows. Catalyzes the hydrolysis of ester bond in chlorophyll to yield chlorophyllide and phytol. The chain is Chlorophyllase-1, chloroplastic from Citrus unshiu (Satsuma mandarin).